Consider the following 549-residue polypeptide: Hydroxylamine reductase (549 aa).

Residues cysteine 3, cysteine 6, cysteine 18, and cysteine 25 each coordinate [2Fe-2S] cluster. Residues histidine 248, glutamate 272, cysteine 316, cysteine 404, cysteine 432, cysteine 457, glutamate 491, and lysine 493 each contribute to the hybrid [4Fe-2O-2S] cluster site. Residue cysteine 404 is modified to Cysteine persulfide.

The protein belongs to the HCP family. [2Fe-2S] cluster is required as a cofactor. The cofactor is hybrid [4Fe-2O-2S] cluster.

The protein resides in the cytoplasm. The catalysed reaction is A + NH4(+) + H2O = hydroxylamine + AH2 + H(+). Functionally, catalyzes the reduction of hydroxylamine to form NH(3) and H(2)O. This chain is Hydroxylamine reductase, found in Aeromonas hydrophila subsp. hydrophila (strain ATCC 7966 / DSM 30187 / BCRC 13018 / CCUG 14551 / JCM 1027 / KCTC 2358 / NCIMB 9240 / NCTC 8049).